The primary structure comprises 359 residues: Trans-enoyl reductase RAP1 (359 aa).

An NADP(+)-binding site is contributed by 49-52 (CDFK). Residue 137–144 (TCIATACM) coordinates substrate. NADP(+) contacts are provided by residues 195 to 198 (SPKN), Tyr-213, and 260 to 261 (LE). 281-285 (GQMIL) is a substrate binding site. 350 to 351 (VA) contacts NADP(+).

This sequence belongs to the zinc-containing alcohol dehydrogenase family. As to quaternary structure, monomer.

It participates in secondary metabolite biosynthesis. Trans-enoyl reductase; part of the gene cluster that mediates the biosynthesis of a tyrosine-derived cytochalasan acting as a fungal signal recognized by resistant rice plants and leads to avirulence in Pi33 resistant rice cultivars. The first step in the pathway is catalyzed by the hybrid PKS-NRPS ACE1, assisted by the enoyl reductase RAP1, that are responsible for fusion of the tyrosine precursor and the polyketide backbone. The polyketide synthase module (PKS) of ACE1 is responsible for the synthesis of the polyketide backbone and the downstream nonribosomal peptide synthetase (NRPS) amidates the carboxyl end of the polyketide with the tyrosine precursor. Because ACE1 lacks a designated enoylreductase (ER) domain, the required activity is provided the enoyl reductase RAP1. Reduction by the hydrolyase ORFZ, followed by dehydration and intra-molecular Diels-Alder cyclization by the Diels-Alderase ORF3 then yield the required isoindolone-fused macrocycle. A number of oxidative steps catalyzed by the tailoring enzymes identified within the cluster, including cytochrome P450 monooxygenases CYP1 to CYP4, the FAD-linked oxidoreductase OXR2 and the short-chain dehydrogenase/reductase OXR1, are further required to afford the final cytochalasans that confer avirulence and which have still to be identified. The monooxygenase CYP1 has been shown to be a site-selective C-18 hydroxylase whereas the function of CYP3 is the site-selective epoxidation of the C-6/C-7 olefin that is present in some intermediate compounds. Finally, SYN2 and RAP2 are not required for avirulence in Pi33 resistant rice cultivars. The polypeptide is Trans-enoyl reductase RAP1 (Pyricularia oryzae (strain 70-15 / ATCC MYA-4617 / FGSC 8958) (Rice blast fungus)).